The chain runs to 324 residues: Viral cathepsin (324 aa).

An N-terminal signal peptide occupies residues 1 to 16 (MNKIMLCLLVCGVVHA). Residues 17 to 113 (ATYDLLKAPN…VILDRPPDRG (97 aa)) constitute a propeptide, activation peptide. Cystine bridges form between C134-C175, C168-C208, and C263-C311. The active site involves C137. N159 carries N-linked (GlcNAc...) asparagine; by host glycosylation. Residues H270 and N290 contribute to the active site.

The protein belongs to the peptidase C1 family. Synthesized as an inactive proenzyme and activated by proteolytic removal of the inhibitory propeptide.

It carries out the reaction Endopeptidase of broad specificity, hydrolyzing substrates of both cathepsin L and cathepsin B.. Functionally, cysteine protease that plays an essential role in host liquefaction to facilitate horizontal transmission of the virus. May participate in the degradation of foreign protein expressed by the baculovirus system. This is Viral cathepsin (VCATH) from Orgyia pseudotsugata (Douglas-fir tussock moth).